Consider the following 973-residue polypeptide: Probable outer membrane protein pmp13 (973 aa).

The first 24 residues, 1–24, serve as a signal peptide directing secretion; it reads MKTSIRKFLISTTLAPCFASTAFT. A compositionally biased stretch (polar residues) spans 284–293; it reads QNNTASPQNS. The disordered stretch occupies residues 284–303; it reads QNNTASPQNSLPAPTPPPTP. The Autotransporter domain occupies 691–973; sequence EDVPGKQLSI…TLDIGSKLRF (283 aa).

The protein belongs to the PMP outer membrane protein family.

The protein resides in the secreted. Its subcellular location is the cell wall. It is found in the cell outer membrane. The sequence is that of Probable outer membrane protein pmp13 (pmp13) from Chlamydia pneumoniae (Chlamydophila pneumoniae).